The following is a 348-amino-acid chain: Nicotinate-nucleotide--dimethylbenzimidazole phosphoribosyltransferase (348 aa).

Glutamate 315 functions as the Proton acceptor in the catalytic mechanism.

Belongs to the CobT family.

It catalyses the reaction 5,6-dimethylbenzimidazole + nicotinate beta-D-ribonucleotide = alpha-ribazole 5'-phosphate + nicotinate + H(+). It participates in nucleoside biosynthesis; alpha-ribazole biosynthesis; alpha-ribazole from 5,6-dimethylbenzimidazole: step 1/2. Catalyzes the synthesis of alpha-ribazole-5'-phosphate from nicotinate mononucleotide (NAMN) and 5,6-dimethylbenzimidazole (DMB). The protein is Nicotinate-nucleotide--dimethylbenzimidazole phosphoribosyltransferase of Dechloromonas aromatica (strain RCB).